A 297-amino-acid polypeptide reads, in one-letter code: Protease HtpX homolog (297 aa).

The next 2 membrane-spanning stretches (helical) occupy residues 14 to 34 and 39 to 59; these read VILL…AGYL and YQLG…SMIF. A Zn(2+)-binding site is contributed by H143. E144 is a catalytic residue. H147 provides a ligand contact to Zn(2+). Helical transmembrane passes span 158 to 178 and 193 to 213; these read IAVA…RMMW and GFGA…PLAA. Residue E225 coordinates Zn(2+).

The protein belongs to the peptidase M48B family. The cofactor is Zn(2+).

It is found in the cell membrane. The protein is Protease HtpX homolog of Streptococcus equi subsp. zooepidemicus (strain MGCS10565).